Consider the following 185-residue polypeptide: Prorelaxin (185 aa).

Positions 1–24 (MPRLFLFHLLGVCLLLNQFSRAVA) are cleaved as a signal peptide. Intrachain disulfides connect Cys-35–Cys-172, Cys-47–Cys-185, and Cys-171–Cys-176. Residues 56–157 (SLNQEDAPLK…LRSLGLDTHS (102 aa)) constitute a propeptide, connecting peptide.

The protein belongs to the insulin family. Heterodimer of a B chain and an A chain linked by two disulfide bonds.

The protein localises to the secreted. Its function is as follows. Relaxin is an ovarian hormone that acts with estrogen to produce dilatation of the birth canal in many mammals. May be involved in remodeling of connective tissues during pregnancy, promoting growth of pubic ligaments and ripening of the cervix. The chain is Prorelaxin (RLN) from Macaca mulatta (Rhesus macaque).